A 513-amino-acid chain; its full sequence is Probable vesicular acetylcholine transporter-A (513 aa).

The Cytoplasmic segment spans residues 1-39; that stretch reads MATEESGGLAQTAAVKLSEMGERTKQLGNAIQDPERQRR. The helical transmembrane segment at 40 to 60 threads the bilayer; sequence IILVIVCVALLLDNMLYMVIV. At 61–98 the chain is on the lumenal, vesicle side; sequence PIVPDYLAHLESESEQAHVKGNSSINITQNENFDLQIG. Residues asparagine 82 and asparagine 86 are each glycosylated (N-linked (GlcNAc...) asparagine). A helical membrane pass occupies residues 99–119; the sequence is VLFASKAILQLLVNPLTGTFI. The Cytoplasmic segment spans residues 120 to 125; that stretch reads DRVGYD. A helical transmembrane segment spans residues 126-146; the sequence is IPLLIGLSIMFVSTCIFAFAE. The Lumenal, vesicle segment spans residues 147–156; it reads NYATLFMARS. The chain crosses the membrane as a helical span at residues 157-174; sequence LQGLGSAFADTSGIAMIA. Residues 175-186 lie on the Cytoplasmic side of the membrane; sequence DKYAEESERSRA. Residues 187-207 form a helical membrane-spanning segment; that stretch reads LGIALAFISFGSLAAPPFGGV. Residues 208 to 215 lie on the Lumenal, vesicle side of the membrane; sequence LYEFAGKR. The helical transmembrane segment at 216–236 threads the bilayer; the sequence is FPFIALACVCLADGILCLTVL. The Cytoplasmic portion of the chain corresponds to 237–257; it reads KPFSSRTRENMPVGTPIYKLM. Residues 258–278 form a helical membrane-spanning segment; the sequence is IDPYIAVVAGALTTCNIPLAF. Residues 279-296 lie on the Lumenal, vesicle side of the membrane; that stretch reads LEPTIANWMEETMNASQW. A glycan (N-linked (GlcNAc...) asparagine) is linked at asparagine 292. A helical transmembrane segment spans residues 297-317; sequence QIGITWLPAFFPHILGVYLTV. The Cytoplasmic portion of the chain corresponds to 318–327; sequence KLAAKYPHLQ. The helical transmembrane segment at 328-348 threads the bilayer; sequence WFYGALGMVIIGASSCIVPAC. Over 349–353 the chain is Lumenal, vesicle; sequence KNFEQ. A helical membrane pass occupies residues 354-374; the sequence is LIIPLCGVCFGIALVDTALLP. Residues 375-390 lie on the Cytoplasmic side of the membrane; sequence TLAFLVDVRHVSVYGS. The chain crosses the membrane as a helical span at residues 391-411; sequence VYAIADISYCVAYALGPIVAG. The Lumenal, vesicle segment spans residues 412–418; sequence KIVHDLG. The helical transmembrane segment at 419-439 threads the bilayer; that stretch reads FVQLNLGMGLANVLYAPALLL. Residues 440–513 are Cytoplasmic-facing; the sequence is LRNVSLMKPS…EEETSEPEYI (74 aa). The disordered stretch occupies residues 475 to 513; it reads RKKHGYSSSGNCVPIDENGTFAGQSKSFSEEETSEPEYI. Residues 504 to 513 show a composition bias toward acidic residues; it reads EEETSEPEYI.

The protein belongs to the major facilitator superfamily. Vesicular transporter family.

It is found in the membrane. Functionally, involved in acetylcholine transport into synaptic vesicles. The sequence is that of Probable vesicular acetylcholine transporter-A from Danio rerio (Zebrafish).